The sequence spans 189 residues: Peptidyl-tRNA hydrolase (189 aa).

Tyr-15 is a tRNA binding site. His-20 serves as the catalytic Proton acceptor. TRNA-binding residues include Tyr-64, Asn-66, and Asn-112.

The protein belongs to the PTH family. As to quaternary structure, monomer.

It is found in the cytoplasm. The catalysed reaction is an N-acyl-L-alpha-aminoacyl-tRNA + H2O = an N-acyl-L-amino acid + a tRNA + H(+). Hydrolyzes ribosome-free peptidyl-tRNAs (with 1 or more amino acids incorporated), which drop off the ribosome during protein synthesis, or as a result of ribosome stalling. Functionally, catalyzes the release of premature peptidyl moieties from peptidyl-tRNA molecules trapped in stalled 50S ribosomal subunits, and thus maintains levels of free tRNAs and 50S ribosomes. The polypeptide is Peptidyl-tRNA hydrolase (Sulfurihydrogenibium sp. (strain YO3AOP1)).